A 235-amino-acid polypeptide reads, in one-letter code: Small ribosomal subunit protein uS2 (235 aa).

It belongs to the universal ribosomal protein uS2 family.

The sequence is that of Small ribosomal subunit protein uS2 from Synechococcus sp. (strain RCC307).